Consider the following 275-residue polypeptide: MASSTAGLRPRRKKNPLSFIYSPKVIRPAVAIAVLLVVWQILCSGEGSNLPSPVQVLEQTYPLILNPFFDNGGTDKGLGIQIFASLTRVAVGFSAAAVVGIALGILIGSSKFMYDALDPIFQVLRTIPPLAWLPIALAALQEAEPSAIFVIFITAIWPIVINTTVGAQQVPQDYRNVSRVLKLSKSQYFFNILFPAAVPYIFTGLRIGIGLSWLAIVAAEMLIGGVGIGFFIWDAYNSSLISEIIIALIYVGIVGLLLDRFIAFLESLVVPAEQK.

7 helical membrane passes run 25 to 45 (VIRP…LCSG), 89 to 109 (VAVG…LIGS), 120 to 140 (IFQV…LAAL), 147 to 167 (AIFV…TVGA), 189 to 209 (FFNI…RIGI), 213 to 233 (WLAI…FFIW), and 238 to 258 (SSLI…GLLL). An ABC transmembrane type-1 domain is found at 82–262 (IFASLTRVAV…IVGLLLDRFI (181 aa)).

Belongs to the binding-protein-dependent transport system permease family. CysTW subfamily. The complex is composed of two ATP-binding proteins (NrtC and NrtD), two transmembrane proteins (NrtB) and a solute-binding protein (NrtA).

It is found in the cell inner membrane. Functionally, part of the ABC transporter complex NrtABCD involved in nitrate uptake. The complex is probably also involved in nitrite transport. Probably responsible for the translocation of the substrate across the membrane. The polypeptide is Nitrate import permease protein NrtB (nrtB) (Synechocystis sp. (strain ATCC 27184 / PCC 6803 / Kazusa)).